A 409-amino-acid chain; its full sequence is Tyrosine--tRNA ligase (409 aa).

The short motif at 54–63 is the 'HIGH' region element; the sequence is PTAPDIHLGH. The 'KMSKS' region motif lies at 238–242; it reads KMSKS. Lys241 contacts ATP. The S4 RNA-binding domain occupies 347–407; the sequence is QGILRILREA…GKRKFARVKL (61 aa).

It belongs to the class-I aminoacyl-tRNA synthetase family. TyrS type 2 subfamily. As to quaternary structure, homodimer.

The protein localises to the cytoplasm. The enzyme catalyses tRNA(Tyr) + L-tyrosine + ATP = L-tyrosyl-tRNA(Tyr) + AMP + diphosphate + H(+). In terms of biological role, catalyzes the attachment of tyrosine to tRNA(Tyr) in a two-step reaction: tyrosine is first activated by ATP to form Tyr-AMP and then transferred to the acceptor end of tRNA(Tyr). The polypeptide is Tyrosine--tRNA ligase (Bordetella bronchiseptica (strain ATCC BAA-588 / NCTC 13252 / RB50) (Alcaligenes bronchisepticus)).